We begin with the raw amino-acid sequence, 436 residues long: MVKCSLIRALMVVAGLVGAAAFTTPANALVELNINKGNIQPLPIAVTDFLQGDMGAQVSQVIAADLQRSGLFAPINKTAFIEKISNPDAAPRFEDWKVINAQALVTGRVTQEADGRLRAEFRLWDTFAGQQMTGQQFYTQPENWRRVAHIIADAIYKQITGEEGYFDTRVVFVSESGTKQQRKRQLAIMDQDGFNVRTLTDGSDLVLTPRFSPSRQEVTYMSFANQQPRVYLLQLETGQREVVGNFPGMTFSPRFSPDGQKVIMSLQQEGNSNIYTMDLRSRTTTRLTSTAAIDTSPSYSPDGARVSFESDRGGKPQIYVMNADGSGQTRISFGDGSYSTPVWSPRGDLIAFTKQSGGKFSIGVMKPDGSGERILTSGFHNEGPTWAPNGRVLMFFRQAAGAGGPQLYSIDLTGYNEQLVKTPSYASDPAWSPLLE.

The first 19 residues, 1 to 19, serve as a signal peptide directing secretion; sequence MVKCSLIRALMVVAGLVGA.

Belongs to the TolB family. In terms of assembly, the Tol-Pal system is composed of five core proteins: the inner membrane proteins TolA, TolQ and TolR, the periplasmic protein TolB and the outer membrane protein Pal. They form a network linking the inner and outer membranes and the peptidoglycan layer.

The protein resides in the periplasm. Part of the Tol-Pal system, which plays a role in outer membrane invagination during cell division and is important for maintaining outer membrane integrity. This is Tol-Pal system protein TolB from Rhizobium etli (strain ATCC 51251 / DSM 11541 / JCM 21823 / NBRC 15573 / CFN 42).